Here is a 28-residue protein sequence, read N- to C-terminus: Cyclotide ltri-A (28 aa).

Residues 1–28 (GVACGESCVYLPCFTVGCTCTSSQCFKN) constitute a cross-link (cyclopeptide (Gly-Asn)). 3 cysteine pairs are disulfide-bonded: Cys4-Cys18, Cys8-Cys20, and Cys13-Cys25.

It belongs to the cyclotide family. Bracelet subfamily. In terms of processing, this is a cyclic peptide.

In terms of biological role, probably participates in a plant defense mechanism. This chain is Cyclotide ltri-A, found in Leonia triandra.